Here is a 102-residue protein sequence, read N- to C-terminus: UV-induced protein uvi31 (102 aa).

This sequence belongs to the BolA/IbaG family.

Its subcellular location is the mitochondrion matrix. It localises to the cytoplasm. The protein localises to the nucleus. In terms of biological role, acts as a mitochondrial iron-sulfur (Fe-S) cluster assembly factor that facilitates [4Fe-4S] cluster insertion into a subset of mitochondrial proteins such as lipoyl synthase (LS) and succinate dehydrogenase (SDH). Required during the last step of iron-sulfur protein assembly when the iron-sulfur cluster is inserted into the target protein. Probably acts together with the monothiol glutaredoxin grx5. Not required for [2Fe-2S] cluster insertion into mitochondrial proteins. May be involved in control of cell division, especially during the resumption from cell cycle arrest. The protein is UV-induced protein uvi31 of Schizosaccharomyces pombe (strain 972 / ATCC 24843) (Fission yeast).